The primary structure comprises 242 residues: Thaumatin-like protein 2 (242 aa).

The first 23 residues, 1 to 23 (MMKTLGAVLSLSLTLLSFGGAHA), serve as a signal peptide directing secretion. Cystine bridges form between Cys32/Cys241, Cys77/Cys87, Cys92/Cys99, Cys147/Cys230, Cys152/Cys213, Cys160/Cys176, Cys180/Cys189, and Cys190/Cys200.

This sequence belongs to the thaumatin family. Preferentially expressed in the abscission zone of fruit. Also expressed in leaf abscission zone.

The protein resides in the secreted. May be involved in protecting plant tissues from pathogen infection. In Prunus persica (Peach), this protein is Thaumatin-like protein 2.